The primary structure comprises 419 residues: Adenylosuccinate synthetase (419 aa).

GTP is bound by residues 12-18 and 40-42; these read GDEGKGK and GHT. Asp13 serves as the catalytic Proton acceptor. 2 residues coordinate Mg(2+): Asp13 and Gly40. Residues 13 to 16, 38 to 41, Thr128, Arg142, Gln220, Thr235, and Arg299 each bind IMP; these read DEGK and NAGH. The Proton donor role is filled by His41. Residue 295 to 301 participates in substrate binding; that stretch reads SITKRPR. Residues Arg301, 327–329, and 407–409 each bind GTP; these read KSD and SLG.

The protein belongs to the adenylosuccinate synthetase family. Homodimer. It depends on Mg(2+) as a cofactor.

It localises to the cytoplasm. It carries out the reaction IMP + L-aspartate + GTP = N(6)-(1,2-dicarboxyethyl)-AMP + GDP + phosphate + 2 H(+). Its pathway is purine metabolism; AMP biosynthesis via de novo pathway; AMP from IMP: step 1/2. In terms of biological role, plays an important role in the de novo pathway of purine nucleotide biosynthesis. Catalyzes the first committed step in the biosynthesis of AMP from IMP. The polypeptide is Adenylosuccinate synthetase (Azobacteroides pseudotrichonymphae genomovar. CFP2).